The primary structure comprises 188 residues: Protein-export protein SecB (188 aa).

2 disordered regions span residues 1 to 21 (MADEQPQGNGQGAAQQGEQPK) and 160 to 188 (RQKAEQAQGGGAEAKGSDSTAAQGSDTQQ). Residues 176–188 (SDSTAAQGSDTQQ) are compositionally biased toward polar residues.

This sequence belongs to the SecB family. As to quaternary structure, homotetramer, a dimer of dimers. One homotetramer interacts with 1 SecA dimer.

Its subcellular location is the cytoplasm. Its function is as follows. One of the proteins required for the normal export of preproteins out of the cell cytoplasm. It is a molecular chaperone that binds to a subset of precursor proteins, maintaining them in a translocation-competent state. It also specifically binds to its receptor SecA. The protein is Protein-export protein SecB of Alkalilimnicola ehrlichii (strain ATCC BAA-1101 / DSM 17681 / MLHE-1).